The following is a 591-amino-acid chain: Probable translation initiation factor IF-2 (591 aa).

One can recognise a tr-type G domain in the interval 7–223; that stretch reads LRTPIVCVMG…LLGLAQKFLE (217 aa). Residues 16–23 are G1; that stretch reads GHVDHGKT. 16 to 23 serves as a coordination point for GTP; that stretch reads GHVDHGKT. Residues 41-45 form a G2 region; the sequence is AITQH. The segment at 78–81 is G3; that stretch reads DTPG. Residues 78–82 and 132–135 contribute to the GTP site; these read DTPGH and NKID. The G4 stretch occupies residues 132–135; the sequence is NKID. Positions 200-202 are G5; the sequence is SAF.

This sequence belongs to the TRAFAC class translation factor GTPase superfamily. Classic translation factor GTPase family. IF-2 subfamily.

In terms of biological role, function in general translation initiation by promoting the binding of the formylmethionine-tRNA to ribosomes. Seems to function along with eIF-2. The chain is Probable translation initiation factor IF-2 from Methanosarcina mazei (strain ATCC BAA-159 / DSM 3647 / Goe1 / Go1 / JCM 11833 / OCM 88) (Methanosarcina frisia).